Here is a 123-residue protein sequence, read N- to C-terminus: Small ribosomal subunit protein uS12cz/uS12cy (123 aa).

The protein belongs to the universal ribosomal protein uS12 family. In terms of assembly, part of the 30S ribosomal subunit.

Its subcellular location is the plastid. It localises to the chloroplast. With S4 and S5 plays an important role in translational accuracy. Located at the interface of the 30S and 50S subunits. The chain is Small ribosomal subunit protein uS12cz/uS12cy (rps12-A) from Gossypium hirsutum (Upland cotton).